The primary structure comprises 382 residues: 6-oxocyclohex-1-ene-1-carbonyl-CoA hydrolase (382 aa).

The protein belongs to the enoyl-CoA hydratase/isomerase family. As to quaternary structure, homohexamer.

It carries out the reaction 6-oxocyclohex-1-ene-1-carbonyl-CoA + 2 H2O = 3-hydroxy-6-carboxyhexanoyl-CoA + H(+). It participates in aromatic compound metabolism; benzoyl-CoA degradation. Its function is as follows. Involved in the central benzoyl-CoA catabolism. Catalyzes the addition of one molecule of water to the double bond and the hydrolytic cleavage of C-C bond in the alicyclic ring, 6-oxocyclohex-1-ene-1-carbonyl-CoA (6-OCH-CoA) to yield 3-hydroxypimelyl-CoA. This chain is 6-oxocyclohex-1-ene-1-carbonyl-CoA hydrolase, found in Syntrophus aciditrophicus (strain SB).